The primary structure comprises 24 residues: Bombinin (24 aa).

At Asn24 the chain carries Asparagine amide.

This sequence belongs to the bombinin family. Expressed by the skin glands.

The protein resides in the secreted. Its function is as follows. Has antimicrobial and hemolytic activities. The polypeptide is Bombinin (Bombina variegata (Yellow-bellied toad)).